The primary structure comprises 101 residues: Small ribosomal subunit protein uS10 (101 aa).

Belongs to the universal ribosomal protein uS10 family. Part of the 30S ribosomal subunit.

In terms of biological role, involved in the binding of tRNA to the ribosomes. The protein is Small ribosomal subunit protein uS10 of Mycobacterium ulcerans (strain Agy99).